The following is a 679-amino-acid chain: WD repeat-containing protein 48 homolog (679 aa).

WD repeat units lie at residues 26–65 (QHRNGVNALQLDSNNGKLYSAGRDAIIRVWNTRTEANEKY), 71–110 (HHNDWVNDIVLCCNGRNLISASCDTTVKVWNAHKGFCMST), 113–152 (THRDYVQALAYAKDREQVASAGLDKAIFLWDVNTLTALTA), 164–203 (GSKDSIYSLAMNPSGTVIVSGSTENILRIWDPRTCMRSMK), 206–245 (GHTENVRCLVVSPDGNQVVSGSSDGTIKVWNLGQQRCIQT), 248–287 (VHKEGVWSLLMSENFQYIISGSRDRNIIVTEMRNPSNKML), 290–329 (EEKAPVLSLGYNIDKTGVWATTWNSDIRCWKLPMYDRCVL), and 349–388 (KGGAAIKECTVLNDKRYIITKDSQDQVVVYDVLRVTKKEE). Residues 594–615 (PSAGNANNSLQNSQSDANSEGS) are disordered.

The protein belongs to the WD repeat WDR48 family. In terms of assembly, catalytic component of the Usp12-46 deubiquitylase complex consisting of Usp12-46, Wdr20 and Uaf1; regulatory subunit that, together wtih Wdr20, stabilizes Usp12-46. The Usp12-46 deubiquitylase complex associates with arr/arrow; the interaction leads to deubiquitination and stabilization of arr/arrow.

In terms of biological role, regulatory component of the Usp12-46 deubiquitylase complex. activates deubiquitination by increasing the catalytic turnover without increasing the affinity of deubiquitinating enzymes for the substrate. The complex deubiquitylates the wg/wingless-signaling receptor arr/arrow, which stabilizes the receptor and increases its concentration at the cell surface; this enhances the sensitivity of cells to wg/wingless-signal stimulation. This increases the amplitude and spatial range of the signaling response to the wg/wingless morphogen gradient, facilitating the precise concentration-dependent regulation of its target genes. Together with Wdr20 and Usp12-46 required for wg/wingless-mediated signaling in the wing imaginal disc and for wg/wingless-dependent regulation of intestinal stem cell proliferation. This Drosophila mojavensis (Fruit fly) protein is WD repeat-containing protein 48 homolog.